The sequence spans 430 residues: tRNA(Ile)-lysidine synthase (430 aa).

27–32 (SGGSDS) lines the ATP pocket.

Belongs to the tRNA(Ile)-lysidine synthase family.

Its subcellular location is the cytoplasm. It carries out the reaction cytidine(34) in tRNA(Ile2) + L-lysine + ATP = lysidine(34) in tRNA(Ile2) + AMP + diphosphate + H(+). Its function is as follows. Ligates lysine onto the cytidine present at position 34 of the AUA codon-specific tRNA(Ile) that contains the anticodon CAU, in an ATP-dependent manner. Cytidine is converted to lysidine, thus changing the amino acid specificity of the tRNA from methionine to isoleucine. The sequence is that of tRNA(Ile)-lysidine synthase from Rickettsia typhi (strain ATCC VR-144 / Wilmington).